A 716-amino-acid chain; its full sequence is Probable glutamate--tRNA ligase, cytoplasmic (716 aa).

Ser190 bears the Phosphoserine mark. Residue 210 to 212 (RFP) coordinates L-glutamate. The 'HIGH' region motif lies at 215–224 (PSGYLHIGHA). His220 contributes to the ATP binding site. L-glutamate is bound by residues Asp246, 386 to 390 (YDFAC), and Arg404. Residues Glu407 and 441–445 (LLSKR) each bind ATP. A 'KMSKS' region motif is present at residues 441–445 (LLSKR).

It belongs to the class-I aminoacyl-tRNA synthetase family. Glutamate--tRNA ligase type 2 subfamily. In terms of assembly, component of a yeast aminoacyl-tRNA synthase (aaRS) complex formed by methionyl-tRNA synthase, glutamyl-tRNA synthase and the tRNA aminoacylation cofactor arc1 in a stoichiometric complex. Interacts with arc1/SPAC30C2.04.

Its subcellular location is the cytoplasm. The protein localises to the nucleus. It carries out the reaction tRNA(Glu) + L-glutamate + ATP = L-glutamyl-tRNA(Glu) + AMP + diphosphate. Functionally, catalyzes the attachment of glutamate to tRNA(Glu) in a two-step reaction: glutamate is first activated by ATP to form Glu-AMP and then transferred to the acceptor end of tRNA(Glu). This Schizosaccharomyces pombe (strain 972 / ATCC 24843) (Fission yeast) protein is Probable glutamate--tRNA ligase, cytoplasmic (gus1).